Consider the following 307-residue polypeptide: Aspartate carbamoyltransferase catalytic subunit (307 aa).

Positions 54 and 55 each coordinate carbamoyl phosphate. Lys-83 contributes to the L-aspartate binding site. Carbamoyl phosphate contacts are provided by Arg-104, His-132, and Gln-135. Arg-165 and Arg-228 together coordinate L-aspartate. Residues Leu-267 and Pro-268 each contribute to the carbamoyl phosphate site.

Belongs to the aspartate/ornithine carbamoyltransferase superfamily. ATCase family. In terms of assembly, heterododecamer (2C3:3R2) of six catalytic PyrB chains organized as two trimers (C3), and six regulatory PyrI chains organized as three dimers (R2).

It carries out the reaction carbamoyl phosphate + L-aspartate = N-carbamoyl-L-aspartate + phosphate + H(+). It functions in the pathway pyrimidine metabolism; UMP biosynthesis via de novo pathway; (S)-dihydroorotate from bicarbonate: step 2/3. Catalyzes the condensation of carbamoyl phosphate and aspartate to form carbamoyl aspartate and inorganic phosphate, the committed step in the de novo pyrimidine nucleotide biosynthesis pathway. The polypeptide is Aspartate carbamoyltransferase catalytic subunit (Clostridium botulinum (strain Eklund 17B / Type B)).